The following is a 100-amino-acid chain: Small ribosomal subunit protein uS14c (100 aa).

This sequence belongs to the universal ribosomal protein uS14 family. As to quaternary structure, part of the 30S ribosomal subunit.

It is found in the plastid. It localises to the chloroplast. Binds 16S rRNA, required for the assembly of 30S particles. The sequence is that of Small ribosomal subunit protein uS14c from Chara vulgaris (Common stonewort).